The primary structure comprises 64 residues: DNA gyrase inhibitor YacG (64 aa).

The Zn(2+) site is built by Cys9, Cys12, Cys28, and Cys32. A disordered region spans residues 45 to 64 (KRIPSSGDLSESDDWSEEPK). Acidic residues predominate over residues 54 to 64 (SESDDWSEEPK).

It belongs to the DNA gyrase inhibitor YacG family. Interacts with GyrB. Zn(2+) is required as a cofactor.

In terms of biological role, inhibits all the catalytic activities of DNA gyrase by preventing its interaction with DNA. Acts by binding directly to the C-terminal domain of GyrB, which probably disrupts DNA binding by the gyrase. The chain is DNA gyrase inhibitor YacG from Escherichia fergusonii (strain ATCC 35469 / DSM 13698 / CCUG 18766 / IAM 14443 / JCM 21226 / LMG 7866 / NBRC 102419 / NCTC 12128 / CDC 0568-73).